A 283-amino-acid polypeptide reads, in one-letter code: Peflin (283 aa).

A run of 8 repeats spans residues 21–30 (PQTNYYGGQQ), 36–44 (QPAASYGRP), 45–54 (APGAPYGSPP), 55–62 (SGGVYGHP), 71–79 (APGGPYGGQ), 80–87 (APGGPYSV), 88–95 (PGSTPYGS), and 96–104 (QQHGSYGQG). Residues 21 to 104 (PQTNYYGGQQ…SQQHGSYGQG (84 aa)) are 8 X 9 AA approximate tandem repeat of [AP]-P-G-G-P-Y-G-G-P-P. A compositionally biased stretch (low complexity) spans 37–70 (PAASYGRPAPGAPYGSPPSGGVYGHPVPGSAAPG). The interval 37-113 (PAASYGRPAP…GAPAGNIPPG (77 aa)) is disordered. Positions 71–81 (APGGPYGGQAP) are enriched in gly residues. Residues 93–104 (YGSQQHGSYGQG) show a composition bias toward low complexity. 5 EF-hand domains span residues 113–148 (GVDPEAFSWFQTVDTDHSGYISLKELKQALVNTNWS), 154–179 (TCTMMMNMFDKSNSGRIDMFGFSALW), 180–215 (RFIQQWRNLFQQYDRDRSGSINQGELHQALCQMGYQ), 216–252 (LSPQFVQIVMSRYAQRSAQPGLQLDRFIQICTQLQSM), and 253–282 (TEAFREKDTGQIGTAKLSYEDFITMTTTRL). Asp-126, Asp-128, Ser-130, Tyr-132, and Glu-137 together coordinate Ca(2+). Ca(2+) is bound by residues Asp-193, Asp-195, Ser-197, Ser-199, and Glu-204.

Heterodimer; heterodimerizes (via the EF-hand 5) with pdcd6.

It is found in the cytoplasm. Its subcellular location is the endoplasmic reticulum. It localises to the membrane. The protein localises to the cytoplasmic vesicle. The protein resides in the COPII-coated vesicle membrane. In terms of biological role, calcium-binding protein that acts as an adapter that bridges unrelated proteins or stabilizes weak protein-protein complexes in response to calcium. Acts as a negative regulator of ER-Golgi transport. The chain is Peflin from Xenopus laevis (African clawed frog).